Reading from the N-terminus, the 744-residue chain is Eukaryotic translation initiation factor 3 subunit B (744 aa).

Positions 1–21 are disordered; sequence MAPSFDHLPDPEEDEYDEEEL. Residues 11–21 show a composition bias toward acidic residues; the sequence is PEEDEYDEEEL. One can recognise an RRM domain in the interval 40 to 126; it reads TFVVIDGLPE…HTLRVNKLTD (87 aa). WD repeat units follow at residues 193–232, 234–290, 307–348, and 577–622; these read DRQHWTESFVQWSPQGTFLTSMHQQGVQLWGGPSWTRQKR, AHPF…PLRS, PIKR…LLDK, and ADHY…LREE.

Belongs to the eIF-3 subunit B family. In terms of assembly, component of the eukaryotic translation initiation factor 3 (eIF-3) complex.

The protein resides in the cytoplasm. RNA-binding component of the eukaryotic translation initiation factor 3 (eIF-3) complex, which is involved in protein synthesis of a specialized repertoire of mRNAs and, together with other initiation factors, stimulates binding of mRNA and methionyl-tRNAi to the 40S ribosome. The eIF-3 complex specifically targets and initiates translation of a subset of mRNAs involved in cell proliferation. This Botryotinia fuckeliana (strain B05.10) (Noble rot fungus) protein is Eukaryotic translation initiation factor 3 subunit B (prt1).